The primary structure comprises 306 residues: Homoserine kinase (306 aa).

90–100 (PLARGLGSSAS) lines the ATP pocket.

Belongs to the GHMP kinase family. Homoserine kinase subfamily.

It localises to the cytoplasm. The enzyme catalyses L-homoserine + ATP = O-phospho-L-homoserine + ADP + H(+). Its pathway is amino-acid biosynthesis; L-threonine biosynthesis; L-threonine from L-aspartate: step 4/5. In terms of biological role, catalyzes the ATP-dependent phosphorylation of L-homoserine to L-homoserine phosphate. This chain is Homoserine kinase, found in Staphylococcus epidermidis (strain ATCC 35984 / DSM 28319 / BCRC 17069 / CCUG 31568 / BM 3577 / RP62A).